The primary structure comprises 201 residues: Small ribosomal subunit protein uS5 (201 aa).

The tract at residues 1–28 (MAGPQRRGSGAGGGERRDRKGRDGGAGA) is disordered. A compositionally biased stretch (basic and acidic residues) spans 14 to 23 (GERRDRKGRD). In terms of domain architecture, S5 DRBM spans 34-97 (YVERVVAINR…EEAKKHFFKV (64 aa)).

This sequence belongs to the universal ribosomal protein uS5 family. In terms of assembly, part of the 30S ribosomal subunit. Contacts proteins S4 and S8.

Functionally, with S4 and S12 plays an important role in translational accuracy. Its function is as follows. Located at the back of the 30S subunit body where it stabilizes the conformation of the head with respect to the body. This Streptomyces coelicolor (strain ATCC BAA-471 / A3(2) / M145) protein is Small ribosomal subunit protein uS5.